Consider the following 336-residue polypeptide: Protein SGT1 homolog (336 aa).

At Ala-2 the chain carries N-acetylalanine. 3 TPR repeats span residues 11-44, 45-78, and 79-112; these read SQRL…NPDD, AQYY…NPNN, and CTAL…DSTD. The 90-residue stretch at 140-229 folds into the CS domain; sequence QSKIKYDWYQ…PEAVRWEKLE (90 aa). Thr-236 is subject to Phosphothreonine. Residues 247–336 form the SGS domain; it reads MYPSSSHYTR…PPDDMEWKQY (90 aa). Phosphoserine is present on Ser-252. A Phosphothreonine modification is found at Thr-255. Lys-266 participates in a covalent cross-link: Glycyl lysine isopeptide (Lys-Gly) (interchain with G-Cter in SUMO1); alternate. A Glycyl lysine isopeptide (Lys-Gly) (interchain with G-Cter in SUMO2); alternate cross-link involves residue Lys-266. Ser-302 bears the Phosphoserine mark.

Belongs to the SGT1 family. In terms of assembly, probably associates with SCF (SKP1-CUL1-F-box protein) complex through interaction with SKP1. Interacts with S100A6. Interacts with HSP90. Post-translationally, phosphorylated at Ser-252 and Ser-302, dephosphorylation promotes nuclear translocation, most likely due to disruption of the SUGT1-HSP90 complex.

The protein localises to the cytoplasm. It localises to the nucleus. In terms of biological role, may play a role in ubiquitination and subsequent proteasomal degradation of target proteins. This is Protein SGT1 homolog from Mus musculus (Mouse).